The following is a 344-amino-acid chain: D-arabinose dehydrogenase [NAD(P)+] heavy chain (344 aa).

Tyr-71 (proton donor) is an active-site residue. Residue His-131 participates in substrate binding. At Thr-151 the chain carries Phosphothreonine. Residue 241–295 coordinates NADP(+); it reads SPLGSHGAPNLKIPLVKKLAEKYNVTGNDLLISYHIRQGTIVIPRSLNPVRISSS.

This sequence belongs to the aldo/keto reductase family. In terms of assembly, heterodimer of a heavy chain and a light chain.

The protein localises to the cytoplasm. The catalysed reaction is D-arabinose + NADP(+) = D-arabinono-1,4-lactone + NADPH + H(+). It carries out the reaction D-arabinose + NAD(+) = D-arabinono-1,4-lactone + NADH + H(+). Its function is as follows. Catalyzes the oxidation of D-arabinose, L-xylose, L-fucose and L-galactose in the presence of NADP(+). In Saccharomyces cerevisiae (strain ATCC 204508 / S288c) (Baker's yeast), this protein is D-arabinose dehydrogenase [NAD(P)+] heavy chain (ARA1).